The following is a 613-amino-acid chain: Chaperone protein DnaK (613 aa).

Thr-173 carries the post-translational modification Phosphothreonine; by autocatalysis. The interval 577–613 (AKQAQAQQEGGAEGAQKADDNVVDAEYEEVNDDQEKK) is disordered. Acidic residues predominate over residues 597 to 613 (NVVDAEYEEVNDDQEKK).

This sequence belongs to the heat shock protein 70 family.

Its function is as follows. Acts as a chaperone. The chain is Chaperone protein DnaK from Bacillus pumilus (strain SAFR-032).